The primary structure comprises 466 residues: Argininosuccinate lyase (466 aa).

This sequence belongs to the lyase 1 family. Argininosuccinate lyase subfamily.

The protein resides in the cytoplasm. It catalyses the reaction 2-(N(omega)-L-arginino)succinate = fumarate + L-arginine. Its pathway is amino-acid biosynthesis; L-arginine biosynthesis; L-arginine from L-ornithine and carbamoyl phosphate: step 3/3. In Clostridium perfringens (strain ATCC 13124 / DSM 756 / JCM 1290 / NCIMB 6125 / NCTC 8237 / Type A), this protein is Argininosuccinate lyase.